The sequence spans 282 residues: MQIVNISAYKFVSLNDIETLRPEMRSRCEDLELKGTILLAPEGINMFLAGPRESIDGFMAWLHADTRFADIAPKESLSDNQPFKRMLVRAKKEIITMKRPLIRPEEGRAPSVRPVDLKRWLDQGHDDEGRPVVMLDTRNDFEVAVGTFDNVVEYNLTKFSEFPDVIEARKAEFEGKTVVSFCTGGIRCEKAAIHMQEVGIGHVYQLEGGILKYFEEVGGDHYRGDCFVFDYRTALNPNLEPAGPKQCFACRAVVTAEEQQSPHYVVGKSCPHCVGRHDQAAA.

Residues 128 to 222 form the Rhodanese domain; the sequence is EGRPVVMLDT…YFEEVGGDHY (95 aa). The Cysteine persulfide intermediate role is filled by cysteine 182.

It belongs to the TrhO family.

It carries out the reaction uridine(34) in tRNA + AH2 + O2 = 5-hydroxyuridine(34) in tRNA + A + H2O. Its function is as follows. Catalyzes oxygen-dependent 5-hydroxyuridine (ho5U) modification at position 34 in tRNAs. In Cupriavidus pinatubonensis (strain JMP 134 / LMG 1197) (Cupriavidus necator (strain JMP 134)), this protein is tRNA uridine(34) hydroxylase.